The chain runs to 89 residues: Large ribosomal subunit protein bL27 (89 aa).

Residues 1 to 21 (MAHKKAGGSSRNGRDSESKRL) form a disordered region.

The protein belongs to the bacterial ribosomal protein bL27 family.

This Bartonella quintana (strain Toulouse) (Rochalimaea quintana) protein is Large ribosomal subunit protein bL27.